A 1016-amino-acid polypeptide reads, in one-letter code: EMILIN-1 (1016 aa).

The N-terminal stretch at 1 to 21 is a signal peptide; the sequence is MAPRTLWSCYLCCLLTAAAGA. In terms of domain architecture, EMI spans 56–131; it reads HRNWCAYVVT…QGYGGDDCAE (76 aa). 3 disulfide bridges follow: Cys60–Cys121, Cys85–Cys92, and Cys120–Cys129. Residues 135-182 are disordered; that stretch reads PALGPASSTPRPLARPARPNLSGSSAGSPLSGLGGEGPGESEKVQQLE. Positions 139–165 are enriched in low complexity; that stretch reads PASSTPRPLARPARPNLSGSSAGSPLS. An N-linked (GlcNAc...) asparagine glycan is attached at Asn154. Residues 216-256 are a coiled coil; the sequence is TAFNGRQQPADAAARPGVHETLNEIQHQLQLLDTRVSTHDQ. 2 disordered regions span residues 257–288 and 383–402; these read ELGHLNNHHGGSSSSGGSRAPAPASAPPGPSE and RGTELGGAAGQGGHPPGYTS. Residues 266–279 show a composition bias toward low complexity; it reads GGSSSSGGSRAPAP. The stretch at 356–420 forms a coiled coil; sequence PELGRRLAEL…EDRFNSTLGP (65 aa). Over residues 386-397 the composition is skewed to gly residues; the sequence is ELGGAAGQGGHP. N-linked (GlcNAc...) asparagine glycosylation occurs at Asn415. The interval 416–435 is disordered; that stretch reads STLGPSEEQEESWPGAPGGL. 2 N-linked (GlcNAc...) asparagine glycosylation sites follow: Asn455 and Asn561. The stretch at 576-603 forms a coiled coil; sequence AHGDEGCGACGGVQEELGRLRDGVERCS. An N-linked (GlcNAc...) asparagine glycan is attached at Asn658. Positions 685–752 form a coiled coil; that stretch reads IISEINRLQQ…GLQGLREGLS (68 aa). N-linked (GlcNAc...) asparagine glycans are attached at residues Asn766 and Asn794. 2 disordered regions span residues 811 to 863 and 942 to 961; these read DLTG…VEGA and RVDSGGYEPEGLENKPVAES. The region spanning 814-864 is the Collagen-like domain; that stretch reads GPAGEAGPPGPPGLQGPPGPAGPPGSPGKDGQEGPIGPPGPQGEQGVEGAP. A compositionally biased stretch (pro residues) spans 821-839; the sequence is PPGPPGLQGPPGPAGPPGS. Residues 835 to 857 adopt a coiled-coil conformation; it reads GPPGSPGKDGQEGPIGPPGPQGE. One can recognise a C1q domain in the interval 866 to 1013; the sequence is APVPQVAFSA…GALLYGDPEL (148 aa).

Homotrimer associated through a moderately stable interaction of the C-terminal globular C1q domains, allowing the nucleation of the triple helix and then a further quaternary assembly to higher-order polymers via intermolecular disulfide bonds. Interacts with EMILIN2. Interacts with EFEMP2; this interaction promotes the incorporation of EFEMP2 into the extracellular matrix. In terms of tissue distribution, distributed in tissues where resilience and elastic recoil are prominent. Highest levels in the adult small intestine, aorta, lung, uterus, and appendix and in the fetal spleen, kidney, lung, and heart; intermediate expression was detected in adult liver, ovary, colon, stomach, lymph node and spleen; adult heart, bladder, prostate, adrenal gland, mammary gland, placenta and kidney showed low expression whereas a series of other adult tissues, including skeletal muscle and different regions of adult brain show no expression. Detected in intramuscular nerve bundles, where it particularly localizes in the epineurium, the most external layer of dense connective tissue enclosing the nerve.

Its subcellular location is the secreted. The protein localises to the extracellular space. It localises to the extracellular matrix. In terms of biological role, involved in elastic and collagen fibers formation. It is required for EFEMP2 deposition into the extracellular matrix, and collagen network assembly and cross-linking via protein-lysine 6-oxidase/LOX activity. May be responsible for anchoring smooth muscle cells to elastic fibers, and may be involved in the processes that regulate vessel assembly. Has cell adhesive capacity. The sequence is that of EMILIN-1 (EMILIN1) from Homo sapiens (Human).